Consider the following 72-residue polypeptide: Translation initiation factor IF-1 (72 aa).

In terms of domain architecture, S1-like spans 1–72 (MSKSDIIEMQ…TRGRITWRAK (72 aa)).

Belongs to the IF-1 family. In terms of assembly, component of the 30S ribosomal translation pre-initiation complex which assembles on the 30S ribosome in the order IF-2 and IF-3, IF-1 and N-formylmethionyl-tRNA(fMet); mRNA recruitment can occur at any time during PIC assembly.

It localises to the cytoplasm. Its function is as follows. One of the essential components for the initiation of protein synthesis. Stabilizes the binding of IF-2 and IF-3 on the 30S subunit to which N-formylmethionyl-tRNA(fMet) subsequently binds. Helps modulate mRNA selection, yielding the 30S pre-initiation complex (PIC). Upon addition of the 50S ribosomal subunit IF-1, IF-2 and IF-3 are released leaving the mature 70S translation initiation complex. The sequence is that of Translation initiation factor IF-1 from Clostridium perfringens (strain 13 / Type A).